A 525-amino-acid polypeptide reads, in one-letter code: GMP synthase [glutamine-hydrolyzing] (525 aa).

In terms of domain architecture, Glutamine amidotransferase type-1 spans 9–207 (RILILDFGSQ…VLEICGCAAL (199 aa)). Cysteine 86 serves as the catalytic Nucleophile. Residues histidine 181 and glutamate 183 contribute to the active site. A GMPS ATP-PPase domain is found at 208-400 (WTPATIIEDA…LGLPYDMLYR (193 aa)). Position 235–241 (235–241 (SGGVDSS)) interacts with ATP.

In terms of assembly, homodimer.

It catalyses the reaction XMP + L-glutamine + ATP + H2O = GMP + L-glutamate + AMP + diphosphate + 2 H(+). It functions in the pathway purine metabolism; GMP biosynthesis; GMP from XMP (L-Gln route): step 1/1. In terms of biological role, catalyzes the synthesis of GMP from XMP. This Edwardsiella ictaluri (strain 93-146) protein is GMP synthase [glutamine-hydrolyzing].